The chain runs to 199 residues: dTTP/UTP pyrophosphatase (199 aa).

The active-site Proton acceptor is the D75.

The protein belongs to the Maf family. YhdE subfamily. A divalent metal cation is required as a cofactor.

It is found in the cytoplasm. The enzyme catalyses dTTP + H2O = dTMP + diphosphate + H(+). The catalysed reaction is UTP + H2O = UMP + diphosphate + H(+). Functionally, nucleoside triphosphate pyrophosphatase that hydrolyzes dTTP and UTP. May have a dual role in cell division arrest and in preventing the incorporation of modified nucleotides into cellular nucleic acids. The protein is dTTP/UTP pyrophosphatase of Methylobacillus flagellatus (strain ATCC 51484 / DSM 6875 / VKM B-1610 / KT).